Here is a 65-residue protein sequence, read N- to C-terminus: Ferredoxin-1 (65 aa).

Positions 3 to 31 (RKFYVDQDECIACESCVEIAPGAFAMDPE) constitute a 4Fe-4S ferredoxin-type domain. Residues Cys-12, Cys-15, Cys-18, and Cys-55 each contribute to the [4Fe-4S] cluster site.

Homodimer. It depends on [4Fe-4S] cluster as a cofactor.

Its function is as follows. Ferredoxins are iron-sulfur proteins that transfer electrons in a wide variety of metabolic reactions. This is Ferredoxin-1 (fd1) from Desulfocurvibacter africanus (Desulfovibrio africanus).